The primary structure comprises 503 residues: Aminoaldehyde dehydrogenase 2, peroxisomal (503 aa).

The Na(+) site is built by Ile28, Asp99, and Leu189. 238 to 245 (GSTMTGSK) serves as a coordination point for NAD(+). Glu260 functions as the Proton acceptor in the catalytic mechanism. Positions 294 and 393 each coordinate NAD(+). Cys294 serves as the catalytic Nucleophile. The short motif at 501–503 (SKL) is the Microbody targeting signal element.

This sequence belongs to the aldehyde dehydrogenase family. As to expression, expressed in leaves, flowers and fruits.

It localises to the peroxisome. The enzyme catalyses 4-aminobutanal + NAD(+) + H2O = 4-aminobutanoate + NADH + 2 H(+). The catalysed reaction is 3-aminopropanal + NAD(+) + H2O = beta-alanine + NADH + 2 H(+). It participates in amine and polyamine biosynthesis; betaine biosynthesis via choline pathway; betaine from betaine aldehyde: step 1/1. In terms of biological role, dehydrogenase that catalyzes the oxidation of several aminoaldehydes. Metabolizes and detoxifies aldehyde products of polyamine degradation to non-toxic amino acids. Catalyzes the oxidation of 4-aminobutanal and 3-aminopropanal to 4-aminobutanoate and beta-alanine, respectively. This is Aminoaldehyde dehydrogenase 2, peroxisomal from Malus domestica (Apple).